The primary structure comprises 629 residues: uncharacterized protein (629 aa).

Positions 1 to 11 (MSDDQQNGKQN) are enriched in polar residues. Disordered regions lie at residues 1–24 (MSDD…EQDD), 62–87 (SNNN…SNYN), 197–464 (SEES…SSLI), and 493–560 (PTPT…STPD). Over residues 247–264 (PSSSSSSSSLINSPTTSK) the composition is skewed to low complexity. Positions 274-288 (PTINPKSLFGLSSTI) are enriched in polar residues. The span at 294–430 (VKTEKEKEKE…DETLNKETPH (137 aa)) shows a compositional bias: basic and acidic residues. Composition is skewed to low complexity over residues 434-464 (PHIT…SSLI) and 493-554 (PTPT…NNNN).

This is an uncharacterized protein from Dictyostelium discoideum (Social amoeba).